The chain runs to 207 residues: Peptidyl-tRNA hydrolase (207 aa).

Tyrosine 14 provides a ligand contact to tRNA. The Proton acceptor role is filled by histidine 19. TRNA is bound by residues tyrosine 64, asparagine 66, and asparagine 112.

It belongs to the PTH family. Monomer.

Its subcellular location is the cytoplasm. The enzyme catalyses an N-acyl-L-alpha-aminoacyl-tRNA + H2O = an N-acyl-L-amino acid + a tRNA + H(+). Functionally, hydrolyzes ribosome-free peptidyl-tRNAs (with 1 or more amino acids incorporated), which drop off the ribosome during protein synthesis, or as a result of ribosome stalling. Catalyzes the release of premature peptidyl moieties from peptidyl-tRNA molecules trapped in stalled 50S ribosomal subunits, and thus maintains levels of free tRNAs and 50S ribosomes. This chain is Peptidyl-tRNA hydrolase, found in Rhodopseudomonas palustris (strain HaA2).